The following is a 67-amino-acid chain: Conotoxin Cal14.2c (67 aa).

A signal peptide spans 1–20; sequence MNVTVMFLVLLLLTMPLTDG. Positions 21–48 are excised as a propeptide; that stretch reads FNIRATNGGELFGPVQRDAGNVLDHGFQ.

The protein belongs to the conotoxin L superfamily. Post-translationally, contains 2 disulfide bonds. In terms of tissue distribution, expressed by the venom duct.

The protein resides in the secreted. Probable neurotoxin with unknown target. Possibly targets ion channels. The protein is Conotoxin Cal14.2c of Californiconus californicus (California cone).